We begin with the raw amino-acid sequence, 287 residues long: Phosphatidylserine decarboxylase proenzyme (287 aa).

Catalysis depends on charge relay system; for autoendoproteolytic cleavage activity residues Asp-89, His-146, and Ser-252. Ser-252 acts as the Schiff-base intermediate with substrate; via pyruvic acid; for decarboxylase activity in catalysis. Ser-252 is subject to Pyruvic acid (Ser); by autocatalysis.

Belongs to the phosphatidylserine decarboxylase family. PSD-B subfamily. Prokaryotic type I sub-subfamily. Heterodimer of a large membrane-associated beta subunit and a small pyruvoyl-containing alpha subunit. Pyruvate serves as cofactor. Post-translationally, is synthesized initially as an inactive proenzyme. Formation of the active enzyme involves a self-maturation process in which the active site pyruvoyl group is generated from an internal serine residue via an autocatalytic post-translational modification. Two non-identical subunits are generated from the proenzyme in this reaction, and the pyruvate is formed at the N-terminus of the alpha chain, which is derived from the carboxyl end of the proenzyme. The autoendoproteolytic cleavage occurs by a canonical serine protease mechanism, in which the side chain hydroxyl group of the serine supplies its oxygen atom to form the C-terminus of the beta chain, while the remainder of the serine residue undergoes an oxidative deamination to produce ammonia and the pyruvoyl prosthetic group on the alpha chain. During this reaction, the Ser that is part of the protease active site of the proenzyme becomes the pyruvoyl prosthetic group, which constitutes an essential element of the active site of the mature decarboxylase.

The protein localises to the cell membrane. It carries out the reaction a 1,2-diacyl-sn-glycero-3-phospho-L-serine + H(+) = a 1,2-diacyl-sn-glycero-3-phosphoethanolamine + CO2. Its pathway is phospholipid metabolism; phosphatidylethanolamine biosynthesis; phosphatidylethanolamine from CDP-diacylglycerol: step 2/2. Functionally, catalyzes the formation of phosphatidylethanolamine (PtdEtn) from phosphatidylserine (PtdSer). This Shewanella woodyi (strain ATCC 51908 / MS32) protein is Phosphatidylserine decarboxylase proenzyme.